An 888-amino-acid chain; its full sequence is Bifunctional lysine-specific demethylase and histidyl-hydroxylase NO66 (888 aa).

3 disordered regions span residues 83–157 (AAAK…GSFS), 187–208 (SNNSDFDFDSDGDSNDFDDSDA), and 261–446 (NSTS…NKLS). The span at 98 to 108 (REKNIAKKQPE) shows a compositional bias: basic and acidic residues. Residues 116–139 (ENVQKQLENGQENNGTLINLSNGK) show a composition bias toward polar residues. Over residues 192–207 (FDFDSDGDSNDFDDSD) the composition is skewed to acidic residues. Positions 273 to 284 (VEPRKAAKRNEP) are enriched in basic and acidic residues. Positions 392-403 (KNKNNDNNNIDT) are enriched in low complexity. Basic and acidic residues predominate over residues 404–429 (NNKKDANNKKDANNNKDINNKKDANN). The span at 430–444 (NKDTNNNKDNNNKNK) shows a compositional bias: low complexity. The JmjC domain maps to 564-709 (CSIRILNPST…NLLEVLMPSV (146 aa)). Fe cation-binding residues include His610, Asp612, and His675.

It belongs to the ROX family. NO66 subfamily. It depends on Fe(2+) as a cofactor.

Its subcellular location is the nucleus. It catalyses the reaction N(6),N(6)-dimethyl-L-lysyl(36)-[histone H3] + 2 2-oxoglutarate + 2 O2 = L-lysyl(36)-[histone H3] + 2 formaldehyde + 2 succinate + 2 CO2. In terms of biological role, oxygenase that can act as both a histone lysine demethylase and a ribosomal histidine hydroxylase. Specifically demethylates 'Lys-4' (H3K4me) and 'Lys-36' (H3K36me) of histone H3, thereby playing a central role in histone code. The protein is Bifunctional lysine-specific demethylase and histidyl-hydroxylase NO66 of Drosophila mojavensis (Fruit fly).